We begin with the raw amino-acid sequence, 450 residues long: Phosphoglucosamine mutase (450 aa).

S97 acts as the Phosphoserine intermediate in catalysis. Mg(2+)-binding residues include S97, D236, D238, and D240. S97 carries the phosphoserine modification.

The protein belongs to the phosphohexose mutase family. Mg(2+) serves as cofactor. Post-translationally, activated by phosphorylation.

The catalysed reaction is alpha-D-glucosamine 1-phosphate = D-glucosamine 6-phosphate. In terms of biological role, catalyzes the conversion of glucosamine-6-phosphate to glucosamine-1-phosphate. The chain is Phosphoglucosamine mutase from Prochlorococcus marinus (strain AS9601).